A 348-amino-acid chain; its full sequence is UDP-3-O-acylglucosamine N-acyltransferase (348 aa).

Residue histidine 257 is the Proton acceptor of the active site.

It belongs to the transferase hexapeptide repeat family. LpxD subfamily. Homotrimer.

The enzyme catalyses a UDP-3-O-[(3R)-3-hydroxyacyl]-alpha-D-glucosamine + a (3R)-hydroxyacyl-[ACP] = a UDP-2-N,3-O-bis[(3R)-3-hydroxyacyl]-alpha-D-glucosamine + holo-[ACP] + H(+). The protein operates within bacterial outer membrane biogenesis; LPS lipid A biosynthesis. Its function is as follows. Catalyzes the N-acylation of UDP-3-O-acylglucosamine using 3-hydroxyacyl-ACP as the acyl donor. Is involved in the biosynthesis of lipid A, a phosphorylated glycolipid that anchors the lipopolysaccharide to the outer membrane of the cell. This chain is UDP-3-O-acylglucosamine N-acyltransferase, found in Bartonella henselae (strain ATCC 49882 / DSM 28221 / CCUG 30454 / Houston 1) (Rochalimaea henselae).